The sequence spans 541 residues: Forkhead box protein O (541 aa).

Residues 118–150 (NEQCGQLGGASSNGSTAMLHTPDGSNSHQTSFP) show a composition bias toward polar residues. Disordered regions lie at residues 118-168 (NEQC…GKKT) and 252-291 (WVINPDAKPGRNPRRTRERSNTIETTTKAQLEKSRRGAKK). Positions 175 to 268 (WGNMSYAELI…KPGRNPRRTR (94 aa)) form a DNA-binding region, fork-head. Thr273 is subject to Phosphothreonine. Residue Ser319 is modified to Phosphoserine; by CaMK2.

In terms of assembly, interacts with rle-1. Interacts with unc-43 and tax-6. Interacts with jnk-1. Interacts with ftt-2. Interacts with prmt-1. Interacts with hcf-1. Phosphorylated by akt-1 and/or akt-2. Phosphorylated by sgk-1. Phosphorylated by unc-43. Phosphorylated by jnk-1. Dephosphorylated by tax-6 in vitro. In terms of processing, ubiquitinated. Ubiquitination by rle-1 leads to proteasome-mediated degradation. Post-translationally, methylation by prmt-1 prevents phosphorylation and promotes translocation to the nucleus to allow for daf-16-dependent transcription. In terms of tissue distribution, isoform b and isoform c are expressed in ectoderm, muscles, intestine and neurons. Isoform b is also expressed in the pharynx. The intestine appears to be the primary site of longevity function.

The protein localises to the nucleus. Its subcellular location is the cytoplasm. Its function is as follows. Forkhead-type transcription factor. Binds to the promoters of genes that contain the daf-16/FOXO binding element (DBE), TTGTTTAC, in their regulatory region. Functions in the Insulin/IGF-1-like signaling (IIS) mediated pathway which affects lipogenesis, lifespan, starvation survival, heat shock and oxidative stress responses, sleep, associative memory, and dauer formation. Longevity signaling predominantly arises from expression in the intestine. Acts in the intestine to mediate the role of slo-1 in age-associated decline in motor activity and longevity. Transcriptional activity of daf-16/FOXO is negatively regulated by interaction with host cell factor homolog hcf-1; and by cytoplasmic sequestration by association with ftt-2. Inhibition is required for the carbon dioxide (CO2) avoidance response. Upon loss of inhibition, daf-16 translocates to the nucleus to regulate genes that result in delayed reproduction and growth while increasing stress resistance starvation tolerance and longevity. Association with arginine methyltransferase prmt-1 prevents phosphorylation and allows for translocation to the nucleus and the subsequent transcription of longevity-related genes. Modulation of its activity by cGMP levels in sensory neurons regulates lifespan. Has a protective role against muscle dystrophy. Involved in mediating protection against aberrant protein aggregation proteotoxicity. Influences transcription of genes that code for proteins involved in immunity as part of a general stress response. Targets genes that inhibit and stimulate tumor growth. Targets kinases, phosphatases and transcription factors that are primarily involved in signaling and gene regulation. Thought to regulate ins-7 in FOXO-to-FOXO signaling, which coordinates daf-16 expression. Activity is positively regulated by shc-1-mediated inhibition of daf-2 and activation of JNK pathway. Through the regulation of its activity by shc-1-mediated inhibition of daf-2 and activation of JNK pathway, plays a role in maintaining the integrity of the gonad. Functions by indirect interaction with jnk-1 of the mitogen-activated protein kinase (MAPK) pathway. Involved in increased proteasome activity by activating expression of rpn-6.1 in response to proteotoxic stress, leading to enhanced assembly of the 26S proteasome, followed by higher proteasome activity. Also regulates proteasome activity in the intestine by preventing expression of deubiquitinase ubh-4. Represses transcription of natc-1. Involved in regulation of srh-234 expression. Binds to the promoter of the AMPK-gamma regulatory subunit, aakg-4, and activates its transcription. Also activates transcription of AMPK-gamma regulatory subunit, aakg-1. Maintains endoplasmic reticulum (ER) function by inducing protein degradation and elimination to remove misfolded secretory proteins from the ER independently of the ire-1/xbp-1 unfolded protein response pathway. Regulates epidermal innate immunity to nematophagous fungal infection and physical wounding which trigger bli-3 induced ROS release, leading to daf-16 activation independently of daf-2 signaling. May negatively regulate resistance to stress caused by oxidized cholesterol adducts by preventing the activation of daf-9 and nuclear hormone receptor daf-12, two members of the steroid signaling pathway. Promotes apoptosis during embryonic development. Probably through the regulation of the autophagy genes atg-18 and atg-16.2, plays a role in regulating stem cell number in the germline during larval development. Plays a role in learning and memory; including associative memory, and aversive gustatory associated learning known as salt avoidance learning. Plays a role in regulating gene transcription in response to white light exposure. Binds to the promoter of dex-1 to positively regulate its expression in seam cells during the dauer phase. Plays a role in transgenerational lipid accumulation in response to a high-fat diet. In terms of biological role, functions in the Insulin/IGF-1-like signaling (IIS) mediated pathway. May play a role in lifespan modulation, but less significant than that played by isoforms d and f. Functionally, functions in the Insulin/IGF-1-like signaling (IIS) mediated pathway. Transcript level in the early adult may play a role in lifespan modulation, but effect is more significant than that played by isoform a. The protein is Forkhead box protein O of Caenorhabditis elegans.